The following is a 282-amino-acid chain: ATP synthase gamma chain (282 aa).

Belongs to the ATPase gamma chain family. As to quaternary structure, F-type ATPases have 2 components, CF(1) - the catalytic core - and CF(0) - the membrane proton channel. CF(1) has five subunits: alpha(3), beta(3), gamma(1), delta(1), epsilon(1). CF(0) has three main subunits: a, b and c.

It localises to the cell membrane. Functionally, produces ATP from ADP in the presence of a proton gradient across the membrane. The gamma chain is believed to be important in regulating ATPase activity and the flow of protons through the CF(0) complex. The chain is ATP synthase gamma chain from Clostridium botulinum (strain ATCC 19397 / Type A).